The sequence spans 310 residues: Olfactory receptor 1496 (310 aa).

Residues 1-23 (MNNQTFITQFLLLGLPIPEEHQH) lie on the Extracellular side of the membrane. Residue Asn-3 is glycosylated (N-linked (GlcNAc...) asparagine). A helical transmembrane segment spans residues 24–48 (LFYALFLVMYLTTILGNLLIIVLVQ). Residues 49–55 (LDSQLHT) lie on the Cytoplasmic side of the membrane. The helical transmembrane segment at 56–77 (PMYLFLSNLSFSDLCFSSVTMP) threads the bilayer. Over 78-98 (KLLQNMRSQDTSIPYGGCLAQ) the chain is Extracellular. Cys-95 and Cys-187 form a disulfide bridge. A helical transmembrane segment spans residues 99-118 (TYFFMVFGDMESFLLVAMAY). The Cytoplasmic segment spans residues 119 to 137 (DRYVAICFPLHYTSIMSPK). A helical membrane pass occupies residues 138–156 (LCTCLVLLLWMLTTSHAMM). Over 157–194 (HTLLAARLSFCENNVVLNFFCDLFVLLKLACSDTYINE) the chain is Extracellular. Residues 195–217 (LMIFIMSTLLIIIPFFLIVMSYA) form a helical membrane-spanning segment. At 218-234 (RIISSILKVPSTQGICK) the chain is on the cytoplasmic side. The helical transmembrane segment at 235–258 (VFSTCGSHLSVVSLFYGTIIGLYL) threads the bilayer. At 259-270 (CPAGNNSTVKEM) the chain is on the extracellular side. The helical transmembrane segment at 271–290 (VMAMMYTVVTPMLNPFIYSL) threads the bilayer. Over 291–310 (RNRDMKRALIRVICSMKITL) the chain is Cytoplasmic.

Belongs to the G-protein coupled receptor 1 family. Olfactory epithelium.

The protein resides in the cell membrane. In terms of biological role, odorant receptor. The sequence is that of Olfactory receptor 1496 (Olr1496) from Rattus norvegicus (Rat).